The primary structure comprises 928 residues: MEAPTPLLLLVLLTTITFFTTSVADDQTAMLALAKSFNPPPSDWSSTTDFCKWSGVRCTGGRVTTISLADKSLTGFIAPEISTLSELKSVSIQRNKLSGTIPSFAKLSSLQEIYMDENNFVGVETGAFAGLTSLQILSLSDNNNITTWSFPSELVDSTSLTTIYLDNTNIAGVLPDIFDSLASLQNLRLSYNNITGVLPPSLGKSSIQNLWINNQDLGMSGTIEVLSSMTSLSQAWLHKNHFFGPIPDLSKSENLFDLQLRDNDLTGIVPPTLLTLASLKNISLDNNKFQGPLPLFSPEVKVTIDHNVFCTTKAGQSCSPQVMTLLAVAGGLGYPSMLAESWQGDDACSGWAYVSCDSAGKNVVTLNLGKHGFTGFISPAIANLTSLKSLYLNGNDLTGVIPKELTFMTSLQLIDVSNNNLRGEIPKFPATVKFSYKPGNALLGTNGGDGSSPGTGGASGGPGGSSGGGGSKVGVIVGVIVAVLVFLAILGFVVYKFVMKRKYGRFNRTDPEKVGKILVSDAVSNGGSGNGGYANGHGANNFNALNSPSSGDNSDRFLLEGGSVTIPMEVLRQVTNNFSEDNILGRGGFGVVYAGELHDGTKTAVKRMECAAMGNKGMSEFQAEIAVLTKVRHRHLVALLGYCVNGNERLLVYEYMPQGNLGQHLFEWSELGYSPLTWKQRVSIALDVARGVEYLHSLAQQSFIHRDLKPSNILLGDDMRAKVADFGLVKNAPDGKYSVETRLAGTFGYLAPEYAATGRVTTKVDVYAFGVVLMEILTGRKALDDSLPDERSHLVTWFRRILINKENIPKALDQTLEADEETMESIYRVAELAGHCTAREPQQRPDMGHAVNVLGPLVEKWKPSCQEEEESFGIDVNMSLPQALQRWQNEGTSSSTMFHGDFSYSQTQSSIPPKASGFPNTFDSADGR.

Positions 1-24 are cleaved as a signal peptide; the sequence is MEAPTPLLLLVLLTTITFFTTSVA. Residues 25–472 are Extracellular-facing; the sequence is DDQTAMLALA…GGSSGGGGSK (448 aa). A disulfide bridge connects residues Cys51 and Cys58. LRR repeat units lie at residues 61–84, 85–107, 108–130, 132–157, 158–180, 181–205, 207–229, 230–251, 252–276, and 278–298; these read GRVT…ISTL, SELK…FAKL, SSLQ…AFAG, TSLQ…LVDS, TSLT…IFDS, LASL…LGKS, IQNL…LSSM, TSLS…DLSK, SENL…LLTL, and SLKN…LFSP. N-linked (GlcNAc...) asparagine glycosylation is present at Asn144. An N-linked (GlcNAc...) asparagine glycan is attached at Asn193. N-linked (GlcNAc...) asparagine glycosylation occurs at Asn281. 2 cysteine pairs are disulfide-bonded: Cys310–Cys318 and Cys348–Cys356. LRR repeat units lie at residues 360–383, 384–407, and 408–435; these read GKNV…AIAN, LTSL…ELTF, and MTSL…VKFS. N-linked (GlcNAc...) asparagine glycosylation occurs at Asn383. The segment at 445–465 is disordered; the sequence is TNGGDGSSPGTGGASGGPGGS. The chain crosses the membrane as a helical span at residues 473–493; it reads VGVIVGVIVAVLVFLAILGFV. Over 494-928 the chain is Cytoplasmic; that stretch reads VYKFVMKRKY…PNTFDSADGR (435 aa). The Protein kinase domain occupies 578–858; the sequence is FSEDNILGRG…HAVNVLGPLV (281 aa). ATP contacts are provided by residues 584–592 and Lys606; that span reads LGRGGFGVV. Asp707 functions as the Proton acceptor in the catalytic mechanism. Composition is skewed to polar residues over residues 898 to 911 and 918 to 928; these read FHGD…QSSI and FPNTFDSADGR. The tract at residues 898–928 is disordered; sequence FHGDFSYSQTQSSIPPKASGFPNTFDSADGR.

It belongs to the protein kinase superfamily. Ser/Thr protein kinase family. In terms of assembly, interacts with BAK1 (via kinase domain), SERK4 and SERK5. Expressed in roots, leaves, stems, siliques and flowers. Ubiquitous, with a high expression in mature pollen grains and in the pericycle and the xylem vasculature of the primary and lateral roots.

The protein resides in the membrane. The catalysed reaction is L-seryl-[protein] + ATP = O-phospho-L-seryl-[protein] + ADP + H(+). It carries out the reaction L-threonyl-[protein] + ATP = O-phospho-L-threonyl-[protein] + ADP + H(+). In terms of biological role, involved in auxin signal transduction and cell expansion and proliferation regulation. May be involved in brassinosteroid-mediated plant growth and development via auxin regulation. May be involved in microspore and pollen development. The polypeptide is Receptor-like kinase TMK4 (Arabidopsis thaliana (Mouse-ear cress)).